Reading from the N-terminus, the 377-residue chain is Alanine racemase (377 aa).

Lysine 37 serves as the catalytic Proton acceptor; specific for D-alanine. Lysine 37 is subject to N6-(pyridoxal phosphate)lysine. Arginine 135 serves as a coordination point for substrate. The Proton acceptor; specific for L-alanine role is filled by tyrosine 271. Methionine 319 is a binding site for substrate.

The protein belongs to the alanine racemase family. Pyridoxal 5'-phosphate is required as a cofactor.

It catalyses the reaction L-alanine = D-alanine. It functions in the pathway amino-acid biosynthesis; D-alanine biosynthesis; D-alanine from L-alanine: step 1/1. Functionally, catalyzes the interconversion of L-alanine and D-alanine. May also act on other amino acids. The sequence is that of Alanine racemase (alr) from Helicobacter pylori (strain P12).